The following is a 450-amino-acid chain: ATP-dependent protease ATPase subunit HslU (450 aa).

Residues valine 29, 71 to 76, aspartate 261, glutamate 328, and arginine 400 each bind ATP; that span reads GVGKTE.

It belongs to the ClpX chaperone family. HslU subfamily. As to quaternary structure, a double ring-shaped homohexamer of HslV is capped on each side by a ring-shaped HslU homohexamer. The assembly of the HslU/HslV complex is dependent on binding of ATP.

It localises to the cytoplasm. ATPase subunit of a proteasome-like degradation complex; this subunit has chaperone activity. The binding of ATP and its subsequent hydrolysis by HslU are essential for unfolding of protein substrates subsequently hydrolyzed by HslV. HslU recognizes the N-terminal part of its protein substrates and unfolds these before they are guided to HslV for hydrolysis. This chain is ATP-dependent protease ATPase subunit HslU, found in Rickettsia conorii (strain ATCC VR-613 / Malish 7).